The primary structure comprises 107 residues: L-rhamnose mutarotase (107 aa).

Y18 contributes to the substrate binding site. Catalysis depends on H22, which acts as the Proton donor. Substrate-binding positions include Y41 and 76-77 (WW).

This sequence belongs to the rhamnose mutarotase family. As to quaternary structure, homodimer.

It localises to the cytoplasm. The enzyme catalyses alpha-L-rhamnose = beta-L-rhamnose. Its pathway is carbohydrate metabolism; L-rhamnose metabolism. Its function is as follows. Involved in the anomeric conversion of L-rhamnose. This chain is L-rhamnose mutarotase, found in Paraburkholderia xenovorans (strain LB400).